A 128-amino-acid chain; its full sequence is Mediator of RNA polymerase II transcription subunit 31 (128 aa).

Belongs to the Mediator complex subunit 31 family. Component of the Mediator complex.

It is found in the nucleus. In terms of biological role, component of the Mediator complex, a coactivator involved in the regulated transcription of nearly all RNA polymerase II-dependent genes. Mediator functions as a bridge to convey information from gene-specific regulatory proteins to the basal RNA polymerase II transcription machinery. Mediator is recruited to promoters by direct interactions with regulatory proteins and serves as a scaffold for the assembly of a functional preinitiation complex with RNA polymerase II and the general transcription factors. The polypeptide is Mediator of RNA polymerase II transcription subunit 31 (med31) (Xenopus tropicalis (Western clawed frog)).